Reading from the N-terminus, the 483-residue chain is Protein PLASTID TRANSCRIPTIONALLY ACTIVE 14 (483 aa).

A chloroplast-targeting transit peptide spans 1–62 (MASSVSLQFL…TQPFPLFQSP (62 aa)). Positions 80–325 (YKIGYVRSVR…KGEEMTINYM (246 aa)) constitute an SET domain. Y324 lines the S-adenosyl-L-methionine pocket.

The protein belongs to the class V-like SAM-binding methyltransferase superfamily. As to quaternary structure, component of the transcriptionally active chromosome (TAC) complexes. Interacts with PTAC12/HMR/PAP5 and PTAC7. Binds to SL1/MTERF3. In terms of tissue distribution, mostly expressed in leaves, flowers and seedlings, and, to a lower extent, in stems and roots.

It is found in the plastid. Its subcellular location is the chloroplast thylakoid. Its function is as follows. Essential for chloroplast development, especially for thylakoid formation. Involved in plastid gene expression, probably by maintaining plastid-encoded RNA polymerase (PEP) activity. The polypeptide is Protein PLASTID TRANSCRIPTIONALLY ACTIVE 14 (Arabidopsis thaliana (Mouse-ear cress)).